Consider the following 391-residue polypeptide: Phosphoglycerate kinase (391 aa).

Substrate contacts are provided by residues 21 to 23, arginine 36, 59 to 62, arginine 113, and arginine 146; these read DLN and HLGR. ATP contacts are provided by residues lysine 197, glutamate 319, and 345 to 348; that span reads GGDT.

The protein belongs to the phosphoglycerate kinase family. Monomer.

It localises to the cytoplasm. The enzyme catalyses (2R)-3-phosphoglycerate + ATP = (2R)-3-phospho-glyceroyl phosphate + ADP. It functions in the pathway carbohydrate degradation; glycolysis; pyruvate from D-glyceraldehyde 3-phosphate: step 2/5. This chain is Phosphoglycerate kinase, found in Xylella fastidiosa (strain 9a5c).